Reading from the N-terminus, the 391-residue chain is Formate-dependent phosphoribosylglycinamide formyltransferase (391 aa).

N(1)-(5-phospho-beta-D-ribosyl)glycinamide-binding positions include 20–21 and glutamate 80; that span reads EL. Residues arginine 112, lysine 153, 158–163, 193–196, and glutamate 201 contribute to the ATP site; these read SSGKGQ and EGFV. Residues 117 to 306 enclose the ATP-grasp domain; the sequence is RLAAETLGLP…EFALHVRAIL (190 aa). 2 residues coordinate Mg(2+): glutamate 265 and glutamate 277. N(1)-(5-phospho-beta-D-ribosyl)glycinamide-binding positions include aspartate 284, lysine 354, and 361–362; that span reads RR.

It belongs to the PurK/PurT family. In terms of assembly, homodimer.

The enzyme catalyses N(1)-(5-phospho-beta-D-ribosyl)glycinamide + formate + ATP = N(2)-formyl-N(1)-(5-phospho-beta-D-ribosyl)glycinamide + ADP + phosphate + H(+). It functions in the pathway purine metabolism; IMP biosynthesis via de novo pathway; N(2)-formyl-N(1)-(5-phospho-D-ribosyl)glycinamide from N(1)-(5-phospho-D-ribosyl)glycinamide (formate route): step 1/1. Its function is as follows. Involved in the de novo purine biosynthesis. Catalyzes the transfer of formate to 5-phospho-ribosyl-glycinamide (GAR), producing 5-phospho-ribosyl-N-formylglycinamide (FGAR). Formate is provided by PurU via hydrolysis of 10-formyl-tetrahydrofolate. The protein is Formate-dependent phosphoribosylglycinamide formyltransferase of Shewanella putrefaciens (strain CN-32 / ATCC BAA-453).